A 95-amino-acid polypeptide reads, in one-letter code: Co-chaperonin GroES (95 aa).

Belongs to the GroES chaperonin family. As to quaternary structure, heptamer of 7 subunits arranged in a ring. Interacts with the chaperonin GroEL.

The protein localises to the cytoplasm. In terms of biological role, together with the chaperonin GroEL, plays an essential role in assisting protein folding. The GroEL-GroES system forms a nano-cage that allows encapsulation of the non-native substrate proteins and provides a physical environment optimized to promote and accelerate protein folding. GroES binds to the apical surface of the GroEL ring, thereby capping the opening of the GroEL channel. This chain is Co-chaperonin GroES, found in Chlorobium limicola (strain DSM 245 / NBRC 103803 / 6330).